Here is an 832-residue protein sequence, read N- to C-terminus: Subtilisin-like protease SBT2.4 (832 aa).

A signal peptide spans 1–27 (METNPRKLRSYSYICLIVCIFVLVVCA). Residues 74–138 (EAKKIEEIHD…VEEDKGVKLM (65 aa)) enclose the Inhibitor I9 domain. In terms of domain architecture, Peptidase S8 spans 150 to 690 (QQVWQKISNE…AGHVNPARAL (541 aa)). The active-site Charge relay system is the D174. N-linked (GlcNAc...) asparagine glycosylation is found at N196 and N238. The active-site Charge relay system is H252. Positions 425–524 (TNGSVLQPLT…SAAQIILRYY (100 aa)) constitute a PA domain. The N-linked (GlcNAc...) asparagine glycan is linked to N426. The active-site Charge relay system is S618. N761, N774, and N800 each carry an N-linked (GlcNAc...) asparagine glycan.

It belongs to the peptidase S8 family.

Its subcellular location is the secreted. Serine protease required for epidermal surface formation in embryos and juvenile plants. Involved in embryonic cuticle formation downstream of BHLH95/ZOU. The protein is Subtilisin-like protease SBT2.4 of Arabidopsis thaliana (Mouse-ear cress).